Reading from the N-terminus, the 72-residue chain is Metallothionein-like protein type 2 (72 aa).

This sequence belongs to the metallothionein superfamily. Type 15 family.

In terms of biological role, metallothioneins have a high content of cysteine residues that bind various heavy metals. The polypeptide is Metallothionein-like protein type 2 (Solanum lycopersicum (Tomato)).